Here is a 22-residue protein sequence, read N- to C-terminus: Ocellatin-LB1 (22 aa).

Methionine amide is present on Met22.

In terms of tissue distribution, expressed by the skin glands.

Its subcellular location is the secreted. In terms of biological role, antibacterial peptide that inhibits Gram-negative bacteria A.actinomycetemcomitans ATCC 29522 (MIC=222.37 uM) and E.coli ATCC 25922 (MIC=114.04 uM). Also has antifungal activity against C.albicans ATCC 18804 (MIC=233.55 uM) and C.lusitaniae ATCC 56936 (MIC=233.55 uM). No activity against the Gram-positive bacterium S.aureus ATCC 25923. Shows virtually no hemolytic activity towards rabbit erythrocytes. The polypeptide is Ocellatin-LB1 (Leptodactylus labyrinthicus (Labyrinth frog)).